Here is a 238-residue protein sequence, read N- to C-terminus: MSRSTMLAHSAIPSSLIRMDLLSPWILTATAPKFLRLFAPATRRRSARSTIPSWSRSSSGKQAHHAWLSSITPCDGARSPWLARIPMAASSLQAQSPLGARRRVYQHLPEEADRLLKGRAQIVNVWRPLRGPVQDWPLAVMDCSTLAQAHIHPTKLYRNRFELRGETVSISHDESQRWYYLDGQQTDECTLIKIWDSKEGISGHMCAHCAFQHPNTPVDAPLRESVEVRCLVFYENQE.

The protein belongs to the asaB hydroxylase/desaturase family.

The protein operates within mycotoxin biosynthesis. Functionally, part of the gene cluster that mediates the biosynthesis of aspirochlorine (or antibiotic A30641), an unusual halogenated spiro compound with distinctive antifungal properties due to selective inhibition of protein biosynthesis, and which is also active against bacteria, viruses, and murine tumor cells. The non-ribosomal peptide synthetase (NRPS) aclP is responsible the formation of the diketopiperazine (DKP) core from the condensation of 2 phenylalanine residues. One Phe residue is tailored into chlorotyrosine by hydroxylation and chlorination, whereas the second Phe undergoes an unprecedented C-C bond cleavage to be converted into glycine. After formation of the DKP, sulfur is incorporated into the DKP by conjugation with glutathione by aclG, followed by its stepwise degradation to the thiol by aclI, aclJ and aclK, and the dithiol oxidation by aclT. In addition, oxygenases (aclB, aclC, aclL and aclO) and O-methyltransferases (aclM and aclU) act as tailoring enzymes to produce the intermediate dechloroaspirochlorine. Ultimately, chlorination of dechloroaspirochlorine by the halogenase aclH is the last step in the aspirochlorine pathway. The sequence is that of Aspirochlorine biosynthesis protein N from Aspergillus oryzae (strain ATCC 42149 / RIB 40) (Yellow koji mold).